The chain runs to 130 residues: Chemotaxis protein CheY-3 (130 aa).

The region spanning 10–127 (KILIVDDFST…TLKEKLDKIF (118 aa)) is the Response regulatory domain. Residues Asp-15, Asp-16, Asp-60, and Asn-62 each contribute to the Mg(2+) site. Residue Asp-60 is modified to 4-aspartylphosphate.

Interacts with FliM. It depends on Mg(2+) as a cofactor.

The protein resides in the cytoplasm. Its function is as follows. Acts as a response regulator to control chemotaxis. Involved in the transmission of sensory signals from the chemoreceptors to the flagellar motors. Switches the flagellar rotation by binding to the flagellar motor switch protein FliM. In its active (phosphorylated or acetylated) form, exhibits enhanced binding to a switch component, FliM, at the flagellar motor which induces a change from counterclockwise to clockwise flagellar rotation. This chain is Chemotaxis protein CheY-3, found in Vibrio cholerae serotype O1 (strain ATCC 39315 / El Tor Inaba N16961).